Reading from the N-terminus, the 1136-residue chain is Phytochrome (1136 aa).

Residues 1–28 (MSTTRPRAATHSASSGSVSRSSKHSARV) are disordered. The span at 11–20 (HSASSGSVSR) shows a compositional bias: low complexity. In terms of domain architecture, GAF spans 231–414 (DIRLLCDTVV…VFGIQLNKEV (184 aa)). C336 provides a ligand contact to phytochromobilin. 2 consecutive PAS domains span residues 629–699 (VTNE…LQGE) and 762–833 (DYRA…TKLR). A Histidine kinase domain is found at 913–1132 (YIRQEIRNPL…IINVEFPLAQ (220 aa)).

Belongs to the phytochrome family. In terms of assembly, homodimer. Post-translationally, contains one covalently linked phytochromobilin chromophore.

Functionally, regulatory photoreceptor which exists in two forms that are reversibly interconvertible by light: the Pr form that absorbs maximally in the red region of the spectrum and the Pfr form that absorbs maximally in the far-red region. Photoconversion of Pr to Pfr induces an array of morphogenic responses, whereas reconversion of Pfr to Pr cancels the induction of those responses. Pfr controls the expression of a number of nuclear genes including those encoding the small subunit of ribulose-bisphosphate carboxylase, chlorophyll A/B binding protein, protochlorophyllide reductase, rRNA, etc. It also controls the expression of its own gene(s) in a negative feedback fashion. The polypeptide is Phytochrome (Picea abies (Norway spruce)).